Reading from the N-terminus, the 577-residue chain is Arginine--tRNA ligase (577 aa).

The 'HIGH' region signature appears at 122–132 (PNVAKEMHVGH).

Belongs to the class-I aminoacyl-tRNA synthetase family. In terms of assembly, monomer.

It is found in the cytoplasm. It catalyses the reaction tRNA(Arg) + L-arginine + ATP = L-arginyl-tRNA(Arg) + AMP + diphosphate. The sequence is that of Arginine--tRNA ligase from Escherichia coli O9:H4 (strain HS).